Here is a 228-residue protein sequence, read N- to C-terminus: MSQWFQLGLQNGNSPLMEQLIFFHDHALLVVILITSLVGFFLAALFSNKFLHRYLLDGQAIETVWTVIPAIILVAIALPSIRLLYLIDEIHNPALTIKVTGHQWYWSYEYSDLNDIQFDSYMIPSNELSTGMYRLLDVDNRSQCPMIKAIRLMITSDAVLHSWAVPSLGIKMDADPGRLNQSSLLVNMPGVFYGQCSEICGSGHSFMPIVIEAVGESDFLKWLELQIS.

Over 1-26 (MSQWFQLGLQNGNSPLMEQLIFFHDH) the chain is Mitochondrial intermembrane. The chain crosses the membrane as a helical span at residues 27–48 (ALLVVILITSLVGFFLAALFSN). Topologically, residues 49–62 (KFLHRYLLDGQAIE) are mitochondrial matrix. Residues 63 to 82 (TVWTVIPAIILVAIALPSIR) traverse the membrane as a helical segment. The Mitochondrial intermembrane portion of the chain corresponds to 83–228 (LLYLIDEIHN…FLKWLELQIS (146 aa)). Cu cation contacts are provided by H161, C196, E198, C200, H204, and M207. E198 is a Mg(2+) binding site.

It belongs to the cytochrome c oxidase subunit 2 family. In terms of assembly, component of the cytochrome c oxidase (complex IV, CIV), a multisubunit enzyme composed of a catalytic core of 3 subunits and several supernumerary subunits. The complex exists as a monomer or a dimer and forms supercomplexes (SCs) in the inner mitochondrial membrane with ubiquinol-cytochrome c oxidoreductase (cytochrome b-c1 complex, complex III, CIII). Cu cation is required as a cofactor.

It is found in the mitochondrion inner membrane. The enzyme catalyses 4 Fe(II)-[cytochrome c] + O2 + 8 H(+)(in) = 4 Fe(III)-[cytochrome c] + 2 H2O + 4 H(+)(out). Its function is as follows. Component of the cytochrome c oxidase, the last enzyme in the mitochondrial electron transport chain which drives oxidative phosphorylation. The respiratory chain contains 3 multisubunit complexes succinate dehydrogenase (complex II, CII), ubiquinol-cytochrome c oxidoreductase (cytochrome b-c1 complex, complex III, CIII) and cytochrome c oxidase (complex IV, CIV), that cooperate to transfer electrons derived from NADH and succinate to molecular oxygen, creating an electrochemical gradient over the inner membrane that drives transmembrane transport and the ATP synthase. Cytochrome c oxidase is the component of the respiratory chain that catalyzes the reduction of oxygen to water. Electrons originating from reduced cytochrome c in the intermembrane space (IMS) are transferred via the dinuclear copper A center (CU(A)) of subunit 2 and heme A of subunit 1 to the active site in subunit 1, a binuclear center (BNC) formed by heme A3 and copper B (CU(B)). The BNC reduces molecular oxygen to 2 water molecules using 4 electrons from cytochrome c in the IMS and 4 protons from the mitochondrial matrix. The sequence is that of Cytochrome c oxidase subunit 2 (COII) from Artemia franciscana (Brine shrimp).